A 168-amino-acid chain; its full sequence is Peptide deformylase 2 (168 aa).

Residues Cys91 and His133 each coordinate Fe cation. Glu134 is a catalytic residue. Residue His137 participates in Fe cation binding.

This sequence belongs to the polypeptide deformylase family. Fe(2+) is required as a cofactor.

The catalysed reaction is N-terminal N-formyl-L-methionyl-[peptide] + H2O = N-terminal L-methionyl-[peptide] + formate. Removes the formyl group from the N-terminal Met of newly synthesized proteins. Requires at least a dipeptide for an efficient rate of reaction. N-terminal L-methionine is a prerequisite for activity but the enzyme has broad specificity at other positions. This Vibrio cholerae serotype O1 (strain ATCC 39315 / El Tor Inaba N16961) protein is Peptide deformylase 2.